The primary structure comprises 210 residues: 2-hydroxy-3-keto-5-methylthiopentenyl-1-phosphate phosphatase (210 aa).

This sequence belongs to the HAD-like hydrolase superfamily. MtnX family.

The enzyme catalyses 2-hydroxy-5-methylsulfanyl-3-oxopent-1-enyl phosphate + H2O = 1,2-dihydroxy-5-(methylsulfanyl)pent-1-en-3-one + phosphate. Its pathway is amino-acid biosynthesis; L-methionine biosynthesis via salvage pathway; L-methionine from S-methyl-5-thio-alpha-D-ribose 1-phosphate: step 4/6. Dephosphorylates 2-hydroxy-3-keto-5-methylthiopentenyl-1-phosphate (HK-MTPenyl-1-P) yielding 1,2-dihydroxy-3-keto-5-methylthiopentene (DHK-MTPene). This Microcystis aeruginosa protein is 2-hydroxy-3-keto-5-methylthiopentenyl-1-phosphate phosphatase.